A 255-amino-acid chain; its full sequence is Adenosylcobinamide-GDP ribazoletransferase (255 aa).

6 consecutive transmembrane segments (helical) span residues 43–63 (LVGTLLGLLCVLVYAFASLFF), 64–84 (PYQVAIVLMMAFSLLLTGAFH), 113–133 (IGTYGSATLTMALIGKFVFLT), 141–161 (FGLMIVVAYTLSRAVAATLIY), 195–215 (LAAISLGLGVGLLLILFAILF), and 234–254 (CLGGAQQLMELGIYLVLIAVV).

It belongs to the CobS family. Mg(2+) is required as a cofactor.

It is found in the cell inner membrane. The enzyme catalyses alpha-ribazole + adenosylcob(III)inamide-GDP = adenosylcob(III)alamin + GMP + H(+). It catalyses the reaction alpha-ribazole 5'-phosphate + adenosylcob(III)inamide-GDP = adenosylcob(III)alamin 5'-phosphate + GMP + H(+). It functions in the pathway cofactor biosynthesis; adenosylcobalamin biosynthesis; adenosylcobalamin from cob(II)yrinate a,c-diamide: step 7/7. Joins adenosylcobinamide-GDP and alpha-ribazole to generate adenosylcobalamin (Ado-cobalamin). Also synthesizes adenosylcobalamin 5'-phosphate from adenosylcobinamide-GDP and alpha-ribazole 5'-phosphate. The sequence is that of Adenosylcobinamide-GDP ribazoletransferase from Vibrio vulnificus (strain CMCP6).